The sequence spans 1079 residues: Psi-producing oxygenase A (1079 aa).

A linoleate 8R-lipoxygenase region spans residues 105-446; it reads TNTFLTTLWN…DGSYDDNDLV (342 aa). Heme b is bound at residue His-202. Tyr-374 is a catalytic residue. His-377 contacts heme b. Residues 654-1079 form a 9,12-octadecadienoate 8-hydroperoxide 8R-isomerase region; it reads QFINSHSACM…WDGDLPEVKE (426 aa).

This sequence belongs to the peroxidase family. As to quaternary structure, homotetramer. Requires heme b as cofactor.

It carries out the reaction (9Z,12Z)-octadecadienoate + O2 = (8R,9Z,12Z)-8-hydroperoxyoctadeca-9,12-dienoate. It catalyses the reaction (8R,9Z,12Z)-8-hydroperoxyoctadeca-9,12-dienoate = (5S,8R,9Z,12Z)-5,8-dihydroxyoctadeca-9,12-dienoate. In terms of biological role, bifunctional heme-containing enzyme that oxidizes linoleic acid to (8R,9Z,12Z)-8-hydroperoxyoctadeca-9,12-dienoate (within the N-terminal heme peroxidase domain), which is subsequently isomerized to (5S,8R,9Z,12Z)-5,8-dihydroxyoctadeca-9,12-dienoate (within the C-terminal P450 heme thiolate domain). Oxidized unsaturated fatty acids, so-called oxylipins, derived from endogenous fatty acids, influence the development of the asexual conidiophores and sexual cleistothecia and regulate the secondary metabolism. These substances were collectively named psi factors and are primarily a mixture of hydroxylated oleic, linoleic and alpha-linolenic acids. They are termed psi-beta, psi-alpha, and psi-gamma, respectively. Oxylipins may also serve as activators of mammalian immune responses contributing to enhanced resistance to opportunistic fungi and as factors that modulate fungal development contributing to resistance to host defenses. The chain is Psi-producing oxygenase A (ppoA) from Aspergillus fumigatus (strain ATCC MYA-4609 / CBS 101355 / FGSC A1100 / Af293) (Neosartorya fumigata).